The following is a 227-amino-acid chain: Lectin (227 aa).

The N-terminal stretch at 1-28 (MTMTSTTTKAMAMAAAVLAAAAVAATNA) is a signal peptide. Gln29 is subject to Pyrrolidone carboxylic acid. 4 consecutive Chitin-binding type-1 domains span residues 29 to 70 (QTCG…ACCS), 71 to 113 (SQRC…PCRA), 114 to 156 (DIKC…ACCP), and 157 to 199 (EKRC…GCYK). 16 disulfide bridges follow: Cys31–Cys46, Cys40–Cys52, Cys45–Cys59, Cys63–Cys68, Cys74–Cys89, Cys83–Cys95, Cys88–Cys102, Cys106–Cys111, Cys117–Cys132, Cys126–Cys138, Cys131–Cys145, Cys149–Cys154, Cys160–Cys175, Cys169–Cys181, Cys174–Cys188, and Cys192–Cys197. 38–40 (MIC) is a binding site for substrate. 90-101 (SQYGYCGFGSEY) contacts substrate. 142–143 (SE) contacts substrate. The propeptide occupies 202–227 (DGMAAILANNQSVSFEGIIESVAELV). A glycan (N-linked (GlcNAc...) asparagine) is linked at Asn211.

N-acetyl-D-glucosamine binding lectin. The polypeptide is Lectin (Oryza sativa subsp. indica (Rice)).